A 342-amino-acid chain; its full sequence is MVKVYYNGDIQENVLNGQKVAIIGYGSQGHAHALNLKESGVDVIVGVRKGGSYTKAQEDGHQVFTVKEAAAQADVLMVLLPDEQQKKVYDEEIKDQLEAGNSLVFAHGFNVHFHQIVPPSDVDVYLVAPKGPGHLVRRTYEQGAGVPALFAIYQDVSGQAKDKALAYAKAIGGARAGVLETTFKEETETDLFGEQAVLCGGLTSLVKAGFETLTEAGYQPELAYFECLHELKLIVDLMYEEGLEGMRYSISDTAQWGDFVSGPRVVDANVKESMKAVLTDIQNGTFAKEWIVENQVNRPRFNAINANENEHQIEVVGRKLREMMPFVKQGKKKEAVSVGAEN.

A KARI N-terminal Rossmann domain is found at 2-181; sequence VKVYYNGDIQ…GGARAGVLET (180 aa). NADP(+) contacts are provided by residues 25–28, arginine 48, serine 52, and 82–85; these read YGSQ and DEQQ. The active site involves histidine 107. Residue glycine 133 coordinates NADP(+). Positions 182-327 constitute a KARI C-terminal knotted domain; the sequence is TFKEETETDL…RKLREMMPFV (146 aa). Mg(2+) contacts are provided by aspartate 190, glutamate 194, glutamate 226, and glutamate 230. Serine 251 provides a ligand contact to substrate.

It belongs to the ketol-acid reductoisomerase family. Mg(2+) is required as a cofactor.

The catalysed reaction is (2R)-2,3-dihydroxy-3-methylbutanoate + NADP(+) = (2S)-2-acetolactate + NADPH + H(+). It carries out the reaction (2R,3R)-2,3-dihydroxy-3-methylpentanoate + NADP(+) = (S)-2-ethyl-2-hydroxy-3-oxobutanoate + NADPH + H(+). It participates in amino-acid biosynthesis; L-isoleucine biosynthesis; L-isoleucine from 2-oxobutanoate: step 2/4. It functions in the pathway amino-acid biosynthesis; L-valine biosynthesis; L-valine from pyruvate: step 2/4. Its function is as follows. Involved in the biosynthesis of branched-chain amino acids (BCAA). Catalyzes an alkyl-migration followed by a ketol-acid reduction of (S)-2-acetolactate (S2AL) to yield (R)-2,3-dihydroxy-isovalerate. In the isomerase reaction, S2AL is rearranged via a Mg-dependent methyl migration to produce 3-hydroxy-3-methyl-2-ketobutyrate (HMKB). In the reductase reaction, this 2-ketoacid undergoes a metal-dependent reduction by NADPH to yield (R)-2,3-dihydroxy-isovalerate. This chain is Ketol-acid reductoisomerase (NADP(+)), found in Bacillus pumilus (strain SAFR-032).